The primary structure comprises 394 residues: Probable peptidoglycan glycosyltransferase FtsW (394 aa).

Over M1–W26 the chain is Cytoplasmic. The helical transmembrane segment at L27–V47 threads the bilayer. Topologically, residues M48–P57 are periplasmic. The chain crosses the membrane as a helical span at residues F58 to V78. At V79 to K88 the chain is on the cytoplasmic side. Residues I89 to I109 form a helical membrane-spanning segment. Residues G110–R118 lie on the Periplasmic side of the membrane. Residues W119–F139 traverse the membrane as a helical segment. The Cytoplasmic portion of the chain corresponds to Y140–E154. A helical transmembrane segment spans residues S155–L175. The Periplasmic segment spans residues E176–P177. The chain crosses the membrane as a helical span at residues D178–V198. Over K199 to R201 the chain is Cytoplasmic. The helical transmembrane segment at Y202–P222 threads the bilayer. Over Y223–D278 the chain is Periplasmic. Residues F279–L299 traverse the membrane as a helical segment. The Cytoplasmic segment spans residues Y300–Y327. Residues G328–L348 traverse the membrane as a helical segment. Over P349 to T354 the chain is Periplasmic. A helical membrane pass occupies residues L355–L375. Residues L376–A394 lie on the Cytoplasmic side of the membrane.

Belongs to the SEDS family. FtsW subfamily.

It is found in the cell inner membrane. The enzyme catalyses [GlcNAc-(1-&gt;4)-Mur2Ac(oyl-L-Ala-gamma-D-Glu-L-Lys-D-Ala-D-Ala)](n)-di-trans,octa-cis-undecaprenyl diphosphate + beta-D-GlcNAc-(1-&gt;4)-Mur2Ac(oyl-L-Ala-gamma-D-Glu-L-Lys-D-Ala-D-Ala)-di-trans,octa-cis-undecaprenyl diphosphate = [GlcNAc-(1-&gt;4)-Mur2Ac(oyl-L-Ala-gamma-D-Glu-L-Lys-D-Ala-D-Ala)](n+1)-di-trans,octa-cis-undecaprenyl diphosphate + di-trans,octa-cis-undecaprenyl diphosphate + H(+). Its pathway is cell wall biogenesis; peptidoglycan biosynthesis. Functionally, peptidoglycan polymerase that is essential for cell division. This chain is Probable peptidoglycan glycosyltransferase FtsW, found in Legionella pneumophila subsp. pneumophila (strain Philadelphia 1 / ATCC 33152 / DSM 7513).